A 275-amino-acid polypeptide reads, in one-letter code: Small ribosomal subunit protein uS2 (275 aa).

The tract at residues 244 to 275 is disordered; the sequence is REGAEASKKKATVKKKAAPRAASGESAEAAAE. The segment covering 252-261 has biased composition (basic residues); that stretch reads KKATVKKKAA. Low complexity predominate over residues 262 to 275; the sequence is PRAASGESAEAAAE.

This sequence belongs to the universal ribosomal protein uS2 family.

The protein is Small ribosomal subunit protein uS2 of Thioalkalivibrio sulfidiphilus (strain HL-EbGR7).